Reading from the N-terminus, the 335-residue chain is MPNSNNQLLKEIRFDWNKEEILEILDMPLIDLMWESQTVHRKFNKYNIQLASLFSVKTGGCEENCSYCSQSIYSASEIKSHPQFQVEEVMARAKIAKNEGADRFCMGWAWREIRDGKSFNAMLEMVSGVRDLGMEACVTAGMLTEEQASRLADAGLTAYNHNLDTSPEHYKNIITTRTYQDRLDTIKRVRNAGINVCCGGIIGLGETNGDRASLLEVLSNMNPHPESVPINSLVAIEGTGLEDNQEIDSIEMIRMIATARILMPKSKIRLSAGREKLSKEAQILCFQCGANSIFYGDELLTTSNPSFQSDRKLLKEVGVSFNKDFETREKTLFSL.

The 229-residue stretch at 46 to 274 (YNIQLASLFS…KSKIRLSAGR (229 aa)) folds into the Radical SAM core domain. The [4Fe-4S] cluster site is built by cysteine 61, cysteine 65, and cysteine 68. [2Fe-2S] cluster contacts are provided by cysteine 105, cysteine 137, cysteine 197, and arginine 269.

It belongs to the radical SAM superfamily. Biotin synthase family. Homodimer. [4Fe-4S] cluster is required as a cofactor. Requires [2Fe-2S] cluster as cofactor.

It catalyses the reaction (4R,5S)-dethiobiotin + (sulfur carrier)-SH + 2 reduced [2Fe-2S]-[ferredoxin] + 2 S-adenosyl-L-methionine = (sulfur carrier)-H + biotin + 2 5'-deoxyadenosine + 2 L-methionine + 2 oxidized [2Fe-2S]-[ferredoxin]. The protein operates within cofactor biosynthesis; biotin biosynthesis; biotin from 7,8-diaminononanoate: step 2/2. Its function is as follows. Catalyzes the conversion of dethiobiotin (DTB) to biotin by the insertion of a sulfur atom into dethiobiotin via a radical-based mechanism. In Prochlorococcus marinus (strain MIT 9312), this protein is Biotin synthase.